A 523-amino-acid chain; its full sequence is Cytoplasmic dynein 1 light intermediate chain 1 (523 aa).

The tract at residues methionine 1 to proline 25 is disordered. The segment covering serine 9–serine 19 has biased composition (low complexity). Glycine 74–threonine 81 provides a ligand contact to ATP. At serine 207 the chain carries Phosphoserine. Threonine 213 is subject to Phosphothreonine. Disordered stretches follow at residues proline 387–methionine 434 and threonine 456–serine 523. 2 positions are modified to phosphoserine: serine 398 and serine 405. Residue threonine 408 is modified to Phosphothreonine. 4 positions are modified to phosphoserine: serine 412, serine 419, serine 421, and serine 427. The segment covering serine 412–serine 421 has biased composition (low complexity). Gly residues predominate over residues serine 458–serine 478. The residue at position 487 (serine 487) is a Phosphoserine. A compositionally biased stretch (basic and acidic residues) spans leucine 493–threonine 503. Residues proline 506–serine 523 are compositionally biased toward low complexity. Serine 510 is modified (phosphoserine). 3 positions are modified to phosphothreonine: threonine 512, threonine 513, and threonine 515. Serine 516 is subject to Phosphoserine.

Belongs to the dynein light intermediate chain family. As to quaternary structure, homodimer. The cytoplasmic dynein 1 complex consists of two catalytic heavy chains (HCs) and a number of non-catalytic subunits presented by intermediate chains (ICs), light intermediate chains (LICs) and light chains (LCs); the composition seems to vary in respect to the IC, LIC and LC composition. The heavy chain homodimer serves as a scaffold for the probable homodimeric assembly of the respective non-catalytic subunits. The ICs and LICs bind directly to the HC dimer and the LCs assemble on the IC dimer. Self-associates. Interacts with DYNC1H1; DYNC1LI1 and DYNC1LI2 bind mutually exclusive to DYNC1H1. Interacts with PCNT. Forms a complex with RAB11FIP3 and RAB11A1; the interaction between DYNC1LI1 and RAB11FIP3 is direct and induces DYNC1LI1 localization onto endosomal membrane; the complex regulates endocytic trafficking. Interacts with RUFY3. (Microbial infection) Interacts with human adenovirus 5 hexon protein; this interaction probably allows virus intracellular transport. Post-translationally, phosphorylated during mitosis but not in interphase.

Its subcellular location is the cytoplasm. The protein localises to the chromosome. The protein resides in the centromere. It is found in the kinetochore. It localises to the cytoskeleton. Its subcellular location is the spindle pole. The protein localises to the recycling endosome membrane. Its function is as follows. Acts as one of several non-catalytic accessory components of the cytoplasmic dynein 1 complex that are thought to be involved in linking dynein to cargos and to adapter proteins that regulate dynein function. Cytoplasmic dynein 1 acts as a motor for the intracellular retrograde motility of vesicles and organelles along microtubules. May play a role in binding dynein to membranous organelles or chromosomes. Probably involved in the microtubule-dependent transport of pericentrin. Is required for progress through the spindle assembly checkpoint. The phosphorylated form appears to be involved in the selective removal of MAD1L1 and MAD1L2 but not BUB1B from kinetochores. Forms a functional Rab11/RAB11FIP3/dynein complex onto endosomal membrane that regulates the movement of peripheral sorting endosomes (SE) along microtubule tracks toward the microtubule organizing center/centrosome, generating the endosomal recycling compartment (ERC). The sequence is that of Cytoplasmic dynein 1 light intermediate chain 1 (DYNC1LI1) from Homo sapiens (Human).